A 242-amino-acid polypeptide reads, in one-letter code: MTTVSMRDMLQAGVHFGHQTRYWNPKMKPFIFGARNGVHIINLEHTVPMFNEALAFISNVASKKGKVLFVGTKRAAGEAIKESALSCDQFYVDHRWLGGMLTNWKTVRQSIKRLKELESQSVDGTFDKLTKKEALMRTRELEKLEKSLGGIKNMGGLPDVLFVIGADHEHIAIKEANNLGIPVVAVVDTNSAPDGVNYIVPGNDDAMRAIRLYTSSVAAAAKAGRGQDLAVQAEQDGFVEAE.

It belongs to the universal ribosomal protein uS2 family.

The polypeptide is Small ribosomal subunit protein uS2 (Shewanella baltica (strain OS223)).